Consider the following 293-residue polypeptide: 4-hydroxybenzoate octaprenyltransferase (293 aa).

7 helical membrane-spanning segments follow: residues 25–45 (IGNF…AKGL), 48–68 (LKVL…GCVI), 101–121 (LFVV…PLTI), 142–162 (HFPQ…AFAA), 165–185 (GAVA…ATIY), 223–243 (VMLA…FWYL), and 271–291 (FLNN…DLHL).

It belongs to the UbiA prenyltransferase family. Mg(2+) serves as cofactor.

Its subcellular location is the cell inner membrane. The enzyme catalyses all-trans-octaprenyl diphosphate + 4-hydroxybenzoate = 4-hydroxy-3-(all-trans-octaprenyl)benzoate + diphosphate. It functions in the pathway cofactor biosynthesis; ubiquinone biosynthesis. Functionally, catalyzes the prenylation of para-hydroxybenzoate (PHB) with an all-trans polyprenyl group. Mediates the second step in the final reaction sequence of ubiquinone-8 (UQ-8) biosynthesis, which is the condensation of the polyisoprenoid side chain with PHB, generating the first membrane-bound Q intermediate 3-octaprenyl-4-hydroxybenzoate. The chain is 4-hydroxybenzoate octaprenyltransferase from Alkalilimnicola ehrlichii (strain ATCC BAA-1101 / DSM 17681 / MLHE-1).